Consider the following 389-residue polypeptide: Equilibrative nucleotide transporter 8 (389 aa).

The next 10 helical transmembrane spans lie at 19–39, 57–77, 87–107, 119–139, 150–170, 187–207, 238–258, 266–286, 331–351, and 367–387; these read VAYVIHFLLGAGSLIPWNALI, TFTVAYMSCSVLVLVLMMTWN, NLGFSMFIIAMMISPLIDWVW, LMVGSVVLCGLADGVVGGSLI, MQAIFAGTASSGIIISLLRIA, HSYFIVSSTILLCCFISCNVL, WPASGMLIIYSVTLSIFPGFI, LLQSWYPILLITVYNISDFVG, VVVLTFMLGLTNGYLTSVLMI, and IFMVVFLGLGLVCGSVIGWLW.

This sequence belongs to the SLC29A/ENT transporter (TC 2.A.57) family. In terms of tissue distribution, expressed in stems, flowers and siliques.

It localises to the cell membrane. May be involved in nucleoside transport. In Arabidopsis thaliana (Mouse-ear cress), this protein is Equilibrative nucleotide transporter 8 (ETN8).